A 119-amino-acid polypeptide reads, in one-letter code: Holo-[acyl-carrier-protein] synthase (119 aa).

2 residues coordinate Mg(2+): D8 and E58.

Belongs to the P-Pant transferase superfamily. AcpS family. Mg(2+) is required as a cofactor.

The protein localises to the cytoplasm. The catalysed reaction is apo-[ACP] + CoA = holo-[ACP] + adenosine 3',5'-bisphosphate + H(+). Functionally, transfers the 4'-phosphopantetheine moiety from coenzyme A to a Ser of acyl-carrier-protein. The polypeptide is Holo-[acyl-carrier-protein] synthase (Streptococcus mutans serotype c (strain ATCC 700610 / UA159)).